The following is a 99-amino-acid chain: MAAAAASRGIGAKLGLREIRIHLCQRSPGSQGVRDFIEKRYVELKKANPDLPILIRECSDVQPKLWARYAFGQEKNVPLNNFSADQVTRALENVLSGKA.

Ala-2 carries the post-translational modification N-acetylalanine. The cysteines at positions 24 and 58 are disulfide-linked. Lys-64 bears the N6-acetyllysine; alternate mark. Lys-64 is modified (N6-succinyllysine; alternate). Lys-75 carries the N6-acetyllysine modification.

The protein belongs to the complex I NDUFA2 subunit family. In terms of assembly, complex I is composed of 45 different subunits.

It is found in the mitochondrion inner membrane. Functionally, accessory subunit of the mitochondrial membrane respiratory chain NADH dehydrogenase (Complex I), that is believed not to be involved in catalysis. Complex I functions in the transfer of electrons from NADH to the respiratory chain. The immediate electron acceptor for the enzyme is believed to be ubiquinone. The chain is NADH dehydrogenase [ubiquinone] 1 alpha subcomplex subunit 2 (NDUFA2) from Macaca fascicularis (Crab-eating macaque).